A 456-amino-acid polypeptide reads, in one-letter code: 1,3-beta-glucanosyltransferase gas4 (456 aa).

The N-terminal stretch at 1 to 25 (MGVANIIYALFLLGPSIFLKATAQT) is a signal peptide. A disulfide bridge links C68 with C97. 5 residues coordinate (1,3-beta-D-glucosyl)n: Y86, N156, E157, D197, and R202. E157 acts as the Proton donor in catalysis. 2 disulfides stabilise this stretch: C211–C350 and C229–C260. N248 carries an N-linked (GlcNAc...) asparagine glycan. Residue E257 is the Nucleophile of the active site. Y296 is a (1,3-beta-D-glucosyl)n binding site. 2 disordered regions span residues 334–353 (NPKG…CPAN) and 384–434 (IEGP…ESGS). N-linked (GlcNAc...) asparagine glycosylation is found at N353 and N415. Residues 417–434 (TSTTSYTSGMTSSSESGS) show a composition bias toward low complexity. Residue S432 is the site of GPI-anchor amidated serine attachment. Positions 433–456 (GSSKIGVAFCQALFITVLIATLSF) are cleaved as a propeptide — removed in mature form.

This sequence belongs to the glycosyl hydrolase 72 family.

The protein resides in the cell membrane. Functionally, splits internally a 1,3-beta-glucan molecule and transfers the newly generated reducing end (the donor) to the non-reducing end of another 1,3-beta-glucan molecule (the acceptor) forming a 1,3-beta linkage, resulting in the elongation of 1,3-beta-glucan chains in the cell wall. Involved in spore wall assembly. The protein is 1,3-beta-glucanosyltransferase gas4 (gas4) of Schizosaccharomyces pombe (strain 972 / ATCC 24843) (Fission yeast).